A 544-amino-acid polypeptide reads, in one-letter code: Probable protein kinase UbiB (544 aa).

Residues Asp123–Leu500 enclose the Protein kinase domain. ATP is bound by residues Leu129–Val137 and Lys152. The active-site Proton acceptor is Asp286. Transmembrane regions (helical) follow at residues Tyr499–Ser519 and Met522–Gly542.

Belongs to the ABC1 family. UbiB subfamily.

The protein resides in the cell inner membrane. It participates in cofactor biosynthesis; ubiquinone biosynthesis [regulation]. Is probably a protein kinase regulator of UbiI activity which is involved in aerobic coenzyme Q (ubiquinone) biosynthesis. Required for the expression of 2'-N-acetyltransferase. The sequence is that of Probable protein kinase UbiB from Providencia stuartii.